We begin with the raw amino-acid sequence, 434 residues long: Glutamate-1-semialdehyde 2,1-aminomutase 1 (434 aa).

Lys270 carries the post-translational modification N6-(pyridoxal phosphate)lysine.

The protein belongs to the class-III pyridoxal-phosphate-dependent aminotransferase family. HemL subfamily. In terms of assembly, homodimer. Requires pyridoxal 5'-phosphate as cofactor.

Its subcellular location is the cytoplasm. The catalysed reaction is (S)-4-amino-5-oxopentanoate = 5-aminolevulinate. It functions in the pathway porphyrin-containing compound metabolism; protoporphyrin-IX biosynthesis; 5-aminolevulinate from L-glutamyl-tRNA(Glu): step 2/2. The chain is Glutamate-1-semialdehyde 2,1-aminomutase 1 from Bacillus anthracis (strain A0248).